The following is a 422-amino-acid chain: Putative acid phosphatase 5 (422 aa).

The first 13 residues, Met-1–Gly-13, serve as a signal peptide directing secretion. His-40 serves as the catalytic Nucleophile. N-linked (GlcNAc...) asparagine glycosylation is found at Asn-104, Asn-210, and Asn-218. 3 disulfide bridges follow: Cys-152–Cys-363, Cys-205–Cys-302, and Cys-338–Cys-342. The Proton donor role is filled by Asp-279. N-linked (GlcNAc...) asparagine glycans are attached at residues Asn-312 and Asn-323.

The protein belongs to the histidine acid phosphatase family.

It carries out the reaction a phosphate monoester + H2O = an alcohol + phosphate. The polypeptide is Putative acid phosphatase 5 (pho-5) (Caenorhabditis elegans).